Reading from the N-terminus, the 229-residue chain is MPIGIPKVAYRIPGEAVSTYVDVYNRLYRERILFLGEDLDDEVANQLIGVMVFLNSEDDTKGIFFYINSPGGSMNAGLGVYDMIQHVNVDVTTICMGLAASMASFILAGGTPGQRLMFPHARVMLHQPMGGNGGKAKYMVEESVEVKRLRELIAHLYVKRTGQSLEKIRKDMNRDNFMRPRQAKEYGLIDHMVTNVNELDELDKQSNDLKKLGKVNLTNIETSNKSELK.

Ser-101 serves as the catalytic Nucleophile. His-126 is a catalytic residue.

The protein belongs to the peptidase S14 family. As to quaternary structure, component of the chloroplastic Clp protease core complex.

It is found in the plastid. The protein localises to the chloroplast stroma. It carries out the reaction Hydrolysis of proteins to small peptides in the presence of ATP and magnesium. alpha-casein is the usual test substrate. In the absence of ATP, only oligopeptides shorter than five residues are hydrolyzed (such as succinyl-Leu-Tyr-|-NHMec, and Leu-Tyr-Leu-|-Tyr-Trp, in which cleavage of the -Tyr-|-Leu- and -Tyr-|-Trp bonds also occurs).. Cleaves peptides in various proteins in a process that requires ATP hydrolysis. Has a chymotrypsin-like activity. Plays a major role in the degradation of misfolded proteins. This is ATP-dependent Clp protease proteolytic subunit from Mesostigma viride (Green alga).